The primary structure comprises 376 residues: Queuine tRNA-ribosyltransferase (376 aa).

Aspartate 92 acts as the Proton acceptor in catalysis. Substrate contacts are provided by residues 92 to 96, aspartate 146, glutamine 190, and glycine 217; that span reads DSGGF. Positions 248–254 are RNA binding; that stretch reads GVGRPED. Aspartate 267 serves as the catalytic Nucleophile. The interval 272–276 is RNA binding; important for wobble base 34 recognition; the sequence is TRNAR. Zn(2+) contacts are provided by cysteine 305, cysteine 307, cysteine 310, and histidine 337.

It belongs to the queuine tRNA-ribosyltransferase family. Homodimer. Within each dimer, one monomer is responsible for RNA recognition and catalysis, while the other monomer binds to the replacement base PreQ1. Requires Zn(2+) as cofactor.

It carries out the reaction 7-aminomethyl-7-carbaguanine + guanosine(34) in tRNA = 7-aminomethyl-7-carbaguanosine(34) in tRNA + guanine. Its pathway is tRNA modification; tRNA-queuosine biosynthesis. Its function is as follows. Catalyzes the base-exchange of a guanine (G) residue with the queuine precursor 7-aminomethyl-7-deazaguanine (PreQ1) at position 34 (anticodon wobble position) in tRNAs with GU(N) anticodons (tRNA-Asp, -Asn, -His and -Tyr). Catalysis occurs through a double-displacement mechanism. The nucleophile active site attacks the C1' of nucleotide 34 to detach the guanine base from the RNA, forming a covalent enzyme-RNA intermediate. The proton acceptor active site deprotonates the incoming PreQ1, allowing a nucleophilic attack on the C1' of the ribose to form the product. After dissociation, two additional enzymatic reactions on the tRNA convert PreQ1 to queuine (Q), resulting in the hypermodified nucleoside queuosine (7-(((4,5-cis-dihydroxy-2-cyclopenten-1-yl)amino)methyl)-7-deazaguanosine). This is Queuine tRNA-ribosyltransferase from Stenotrophomonas maltophilia (strain K279a).